Reading from the N-terminus, the 489-residue chain is ATP synthase subunit beta 1 (489 aa).

Residue 159 to 166 (GGAGVGKT) participates in ATP binding. Over residues 465–477 (EKSKKAAEDKPKA) the composition is skewed to basic and acidic residues. Residues 465–489 (EKSKKAAEDKPKAEEDEDATSLHDA) are disordered.

This sequence belongs to the ATPase alpha/beta chains family. As to quaternary structure, F-type ATPases have 2 components, CF(1) - the catalytic core - and CF(0) - the membrane proton channel. CF(1) has five subunits: alpha(3), beta(3), gamma(1), delta(1), epsilon(1). CF(0) has three main subunits: a(1), b(2) and c(9-12). The alpha and beta chains form an alternating ring which encloses part of the gamma chain. CF(1) is attached to CF(0) by a central stalk formed by the gamma and epsilon chains, while a peripheral stalk is formed by the delta and b chains.

Its subcellular location is the cell inner membrane. It carries out the reaction ATP + H2O + 4 H(+)(in) = ADP + phosphate + 5 H(+)(out). Produces ATP from ADP in the presence of a proton gradient across the membrane. The catalytic sites are hosted primarily by the beta subunits. The polypeptide is ATP synthase subunit beta 1 (Marinomonas sp. (strain MWYL1)).